A 205-amino-acid chain; its full sequence is MAEASSVNVGSGCAEKGPEELSQEPARPGTNISRVKLFDTMVDTFLQKLVAAGSFQRFTDCYKRFYQLQPEMTQRIYDKFVTQLQTSIQEEISEIKAEGNLEAVLIALDAIVEESKDRKEQAWRPSGIPEKDLRSAMAPYLLQQRDALQRRVQRQEAENRQLADAVLAGRRQLEELQLQAQARQQAWQALHREQKELLAVLKEPE.

The interval 1 to 28 is disordered; it reads MAEASSVNVGSGCAEKGPEELSQEPARP. Positions 140–190 form a coiled coil; it reads YLLQQRDALQRRVQRQEAENRQLADAVLAGRRQLEELQLQAQARQQAWQAL.

Component of the MIS12 complex composed of MIS12, DSN1, NSL1 and PMF1. Interacts with COPS7A. Interacts via its coiled-coil domain with the leucine-zipper domain of NFE2L2. The interaction with NFE2L2 is required for the transcriptional regulation of SSAT.

It localises to the nucleus. It is found in the chromosome. The protein localises to the centromere. The protein resides in the kinetochore. Functionally, part of the MIS12 complex which is required for normal chromosome alignment and segregation and kinetochore formation during mitosis. May act as a cotranscription partner of NFE2L2 involved in regulation of polyamine-induced transcription of SSAT. The chain is Polyamine-modulated factor 1 (PMF1) from Bos taurus (Bovine).